Here is a 139-residue protein sequence, read N- to C-terminus: Putative pre-16S rRNA nuclease (139 aa).

It belongs to the YqgF nuclease family.

The protein resides in the cytoplasm. Its function is as follows. Could be a nuclease involved in processing of the 5'-end of pre-16S rRNA. This is Putative pre-16S rRNA nuclease from Legionella pneumophila (strain Lens).